The chain runs to 1334 residues: Aldehyde oxidase 3 (1334 aa).

Residues 8-95 (DELIFFVNGK…GAAVTTVEGI (88 aa)) enclose the 2Fe-2S ferredoxin-type domain. Positions 47, 52, 55, and 77 each coordinate [2Fe-2S] cluster. Gln-116 contributes to the Mo-molybdopterin binding site. [2Fe-2S] cluster contacts are provided by Cys-117, Cys-120, Cys-152, and Cys-154. Residues 236-421 (FRGERTTWIA…ISVFVPLSRK (186 aa)) form the FAD-binding PCMH-type domain. 264–271 (LVIGNTCL) contacts FAD. Ser-320 is modified (phosphoserine). Positions 354, 358, 367, and 411 each coordinate FAD. Residues Gly-801, Leu-1042, and Gln-1198 each coordinate Mo-molybdopterin. The active-site Proton acceptor; for azaheterocycle hydroxylase activity is the Glu-1265.

The protein belongs to the xanthine dehydrogenase family. In terms of assembly, homodimer. It depends on [2Fe-2S] cluster as a cofactor. Requires FAD as cofactor. Mo-molybdopterin is required as a cofactor.

The protein localises to the cytoplasm. The enzyme catalyses an aldehyde + O2 + H2O = a carboxylate + H2O2 + H(+). Functionally, oxidase with broad substrate specificity, oxidizing aromatic azaheterocycles, such as N1-methylnicotinamide and phthalazine, as well as aldehydes, such as benzaldehyde, retinal and pyridoxal. Plays a key role in the metabolism of xenobiotics and drugs containing aromatic azaheterocyclic substituents. Is probably involved in the regulation of reactive oxygen species homeostasis. Is a prominent source of superoxide generation via the one-electron reduction of molecular oxygen. Also catalyzes nitric oxide (NO) production; under anaerobic conditions, reduces nitrite to NO with NADH or aldehyde as electron donor, but under aerobic conditions, NADH is the preferred substrate. These reactions may be catalyzed by several isozymes. The sequence is that of Aldehyde oxidase 3 (Aox3) from Rattus norvegicus (Rat).